Reading from the N-terminus, the 320-residue chain is MATTVAATKLTSLKAVKKLGFREIRQVRQWSPLQSAMPHFGMLRCGSRQSFATSTVVKAQATAVEQSTGEAVPKVESPVVVVTGASRGIGKAIALSLGKAGCKVLVNYARSAKEAEEVSKQIEAYGGQAITFGGDVSKEADVEAMMKTAIDAWGTIDVVVNNAGITRDTLLIRMKKSQWDEVIDLNLTGVFLCTQAATKIMMKKRKGRIINIASVVGLIGNIGQANYAAAKAGVIGFSKTAAREGASRNINVNVVCPGFIASDMTAKLGEDMEKKILGTIPLGRYGQPEDVAGLVEFLALSPAASYITGQAFTIDGGIAI.

Residues 1-60 (MATTVAATKLTSLKAVKKLGFREIRQVRQWSPLQSAMPHFGMLRCGSRQSFATSTVVKAQ) constitute a chloroplast transit peptide. Residue 82 to 106 (VTGASRGIGKAIALSLGKAGCKVLV) participates in NADP(+) binding. Residue serine 214 coordinates substrate. Catalysis depends on tyrosine 227, which acts as the Proton acceptor.

It belongs to the short-chain dehydrogenases/reductases (SDR) family. In terms of assembly, homotetramer.

It localises to the plastid. Its subcellular location is the chloroplast. It carries out the reaction a (3R)-hydroxyacyl-[ACP] + NADP(+) = a 3-oxoacyl-[ACP] + NADPH + H(+). Its pathway is lipid metabolism; fatty acid biosynthesis. In Brassica napus (Rape), this protein is 3-oxoacyl-[acyl-carrier-protein] reductase 1, chloroplastic (gbkr1).